A 694-amino-acid polypeptide reads, in one-letter code: Ribonuclease R (694 aa).

The RNB domain occupies 204-525 (RKDLRDLLCF…IVHRLLFHPL (322 aa)). The S1 motif domain occupies 571–648 (ATLYKAFIIT…LTQSIEWTLV (78 aa)). Residues 652–694 (TKAKAKRTSKKKKTESVTTKEKKKSPAKKKKGATKTKKGSGKN) are disordered. 2 stretches are compositionally biased toward basic residues: residues 654-664 (AKAKRTSKKKK) and 672-694 (EKKK…SGKN).

The protein belongs to the RNR ribonuclease family. RNase R subfamily.

The protein resides in the cytoplasm. It carries out the reaction Exonucleolytic cleavage in the 3'- to 5'-direction to yield nucleoside 5'-phosphates.. 3'-5' exoribonuclease that releases 5'-nucleoside monophosphates and is involved in maturation of structured RNAs. This chain is Ribonuclease R, found in Chlamydia trachomatis serovar D (strain ATCC VR-885 / DSM 19411 / UW-3/Cx).